A 368-amino-acid polypeptide reads, in one-letter code: Histone macroH2A1.1 (368 aa).

Positions 154–177 are disordered; the sequence is AVSSSSAAASSSSSASSSSSVAPK. In terms of domain architecture, Macro spans 184 to 368; that stretch reads TILSKKTLHL…VYNAELINTN (185 aa). Asp203, Leu204, Gln225, Val226, Ser275, Gly313, Ser314, Gly315, Asn316, and Asn317 together coordinate a glycoprotein.

Belongs to the histone H2A family. As to quaternary structure, the nucleosome is a histone octamer containing two molecules each of H2A, H2B, H3 and H4 assembled in one H3-H4 heterotetramer and two H2A-H2B heterodimers.

It localises to the nucleus. Its subcellular location is the chromosome. In terms of biological role, variant histone H2A which replaces conventional H2A in a subset of nucleosomes where it represses transcription. Nucleosomes wrap and compact DNA into chromatin, limiting DNA accessibility to the cellular machineries which require DNA as a template. Histones thereby play a central role in transcription regulation, DNA repair, DNA replication and chromosomal stability. DNA accessibility is regulated via a complex set of post-translational modifications of histones, also called histone code, and nucleosome remodeling. Its function is as follows. Specifically binds poly-ADP-ribose and plays a key role in NAD(+) metabolism. Able to bind to the ends of poly-ADP-ribose chains created by PARP1 and cap them. This prevents PARP1 from further addition of ADP-ribose and thus limits the consumption of nuclear NAD(+), allowing the cell to maintain proper NAD(+) levels in both the nucleus and the mitochondria to promote proper mitochondrial respiration. This is Histone macroH2A1.1 from Capsaspora owczarzaki (strain ATCC 30864).